Reading from the N-terminus, the 780-residue chain is Subtilisin-like protease SBT1.3 (780 aa).

The signal sequence occupies residues 1–25; the sequence is MANKNPLQKPFLFIILSINLIFLQA. The propeptide at 26–120 is activation peptide; it reads ETTTQISTKK…VIPETRYELH (95 aa). The Inhibitor I9 domain occupies 36-120; sequence TYVIHMDKSA…VIPETRYELH (85 aa). In terms of domain architecture, Peptidase S8 spans 116–628; the sequence is RYELHTTRSP…AGHIDPLRAT (513 aa). Asp154 (charge relay system) is an active-site residue. Residue Asn165 is glycosylated (N-linked (GlcNAc...) asparagine). His227 acts as the Charge relay system in catalysis. Positions 384–477 constitute a PA domain; sequence KQYPLVYLGR…GEKEGKLIKQ (94 aa). N-linked (GlcNAc...) asparagine glycosylation is present at Asn394. Catalysis depends on Ser560, which acts as the Charge relay system. N-linked (GlcNAc...) asparagine glycans are attached at residues Asn663 and Asn731.

Belongs to the peptidase S8 family.

It is found in the secreted. This Arabidopsis thaliana (Mouse-ear cress) protein is Subtilisin-like protease SBT1.3.